Here is a 790-residue protein sequence, read N- to C-terminus: Threonine--tRNA ligase 2, cytoplasmic (790 aa).

N-acetylalanine is present on A2. Residues 13-68 (SRLQRQEEDIRWLCAEVQRLRDEQLRGPERGQAEGPRLTREVAQLQAENRDLHQRL) are a coiled coil. The segment at 80–117 (RTEAGRAAAHEPPTQNQEKDTKKKRLKQSEPGREVKQP) is disordered. The span at 96–117 (QEKDTKKKRLKQSEPGREVKQP) shows a compositional bias: basic and acidic residues. Residues 148-210 (NVISVRVAGG…EGDSTVELLM (63 aa)) enclose the TGS domain. S441 bears the Phosphoserine mark. The short motif at 774-780 (KLKNLKK) is the Nuclear localization signal element.

It belongs to the class-II aminoacyl-tRNA synthetase family. As to quaternary structure, may be a component of the multisynthetase complex (MSC), a large multi-subunit complex which contains at least eight different aminoacyl-tRNA synthetases plus three auxillary subunits AIMP1, AIMP2 and EEF1E1. Interacts with the MSC components EPRS1, AIMP1, AIMP2 and KARS1. As to expression, ubiquitous (at protein level). Strongly expressed in muscle (at protein level). Moderately expressed in heart and liver (at protein level). Weakly expressed in stomach, kidney, testis, spleen, brain, fat and lung (at protein level).

The protein resides in the cytoplasm. It localises to the nucleus. It carries out the reaction tRNA(Thr) + L-threonine + ATP = L-threonyl-tRNA(Thr) + AMP + diphosphate + H(+). In terms of biological role, catalyzes the attachment of threonine to tRNA(Thr) in a two-step reaction: threonine is first activated by ATP to form Thr-AMP and then transferred to the acceptor end of tRNA(Thr). Also edits incorrectly charged tRNA(Thr) via its editing domain, at the post-transfer stage. This is Threonine--tRNA ligase 2, cytoplasmic (Tars3) from Mus musculus (Mouse).